Reading from the N-terminus, the 59-residue chain is Large ribosomal subunit protein bL32 (59 aa).

A disordered region spans residues 1–25 (MAVQQNKKSPSKRGMHRSHDFLNAA).

It belongs to the bacterial ribosomal protein bL32 family.

In Paraburkholderia phymatum (strain DSM 17167 / CIP 108236 / LMG 21445 / STM815) (Burkholderia phymatum), this protein is Large ribosomal subunit protein bL32.